Here is a 105-residue protein sequence, read N- to C-terminus: uncharacterized protein (105 aa).

2 consecutive transmembrane segments (helical) span residues 56 to 76 (ALIW…VLII) and 85 to 105 (INLN…GVFY).

The protein resides in the membrane. This is an uncharacterized protein from Aedes vexans (Inland floodwater mosquito).